A 1243-amino-acid chain; its full sequence is Tau-tubulin kinase 2 (1243 aa).

The Protein kinase domain occupies tryptophan 21 to isoleucine 284. ATP is bound by residues isoleucine 27 to isoleucine 35 and lysine 50. Catalysis depends on aspartate 141, which acts as the Proton acceptor. Serine 445 carries the phosphoserine modification. Over residues valine 674–serine 683 the composition is skewed to polar residues. Disordered stretches follow at residues valine 674–leucine 695 and threonine 737–aspartate 761. Serine 786 is modified (phosphoserine). The interval glutamine 1063–glycine 1086 is disordered. Residues leucine 1073–arginine 1084 show a composition bias toward pro residues. Serine 1102 is modified (phosphoserine). Over residues glutamine 1115–serine 1129 the composition is skewed to polar residues. A disordered region spans residues glutamine 1115–arginine 1243. Composition is skewed to low complexity over residues valine 1144 to alanine 1170, serine 1187 to serine 1202, and serine 1227 to arginine 1243.

This sequence belongs to the protein kinase superfamily. CK1 Ser/Thr protein kinase family. As to quaternary structure, interacts with CEP164. Interacts with MCRS1; the interaction is required for recruitment of TTBK2 to the mother centriole.

The protein resides in the cell projection. It is found in the cilium. Its subcellular location is the cytoplasm. The protein localises to the cytoskeleton. It localises to the cilium basal body. The protein resides in the microtubule organizing center. It is found in the centrosome. Its subcellular location is the centriole. The protein localises to the cytosol. It localises to the nucleus. It catalyses the reaction L-seryl-[protein] + ATP = O-phospho-L-seryl-[protein] + ADP + H(+). The catalysed reaction is L-threonyl-[protein] + ATP = O-phospho-L-threonyl-[protein] + ADP + H(+). Serine/threonine kinase that acts as a key regulator of ciliogenesis: controls the initiation of ciliogenesis by binding to the distal end of the basal body and promoting the removal of CCP110, which caps the mother centriole, leading to the recruitment of IFT proteins, which build the ciliary axoneme. Has some substrate preference for proteins that are already phosphorylated on a Tyr residue at the +2 position relative to the phosphorylation site. Able to phosphorylate tau on serines in vitro. Phosphorylates MPHOSPH9 which promotes its ubiquitination and proteasomal degradation, loss of MPHOSPH9 facilitates the removal of the CP110-CEP97 complex (a negative regulator of ciliogenesis) from the mother centrioles, promoting the initiation of ciliogenesis. Required for recruitment of CPLANE2 and INTU to the mother centriole. The sequence is that of Tau-tubulin kinase 2 (Ttbk2) from Mus musculus (Mouse).